A 181-amino-acid polypeptide reads, in one-letter code: Oligoribonuclease (181 aa).

One can recognise an Exonuclease domain in the interval 8 to 171; the sequence is LIWVDLEMTG…VDIQESIAEL (164 aa). Tyr129 is a catalytic residue.

The protein belongs to the oligoribonuclease family.

Its subcellular location is the cytoplasm. Functionally, 3'-to-5' exoribonuclease specific for small oligoribonucleotides. The protein is Oligoribonuclease of Shewanella loihica (strain ATCC BAA-1088 / PV-4).